The chain runs to 293 residues: Proline iminopeptidase (293 aa).

Residues 28–277 (PLVLLHGGPG…NCSHMSFVQK (250 aa)) form the AB hydrolase-1 domain. The active-site Nucleophile is Ser-105. Asp-244 is an active-site residue. Catalysis depends on His-271, which acts as the Proton donor.

The protein belongs to the peptidase S33 family.

The protein resides in the cell envelope. The enzyme catalyses Release of N-terminal proline from a peptide.. Its function is as follows. Releases the N-terminal proline from various substrates. The chain is Proline iminopeptidase from Lactobacillus acidophilus (strain ATCC 700396 / NCK56 / N2 / NCFM).